Reading from the N-terminus, the 139-residue chain is Small ribosomal subunit protein uS12 (139 aa).

The residue at position 102 (Asp102) is a 3-methylthioaspartic acid.

Belongs to the universal ribosomal protein uS12 family. Part of the 30S ribosomal subunit. Contacts proteins S8 and S17. May interact with IF1 in the 30S initiation complex.

In terms of biological role, with S4 and S5 plays an important role in translational accuracy. Its function is as follows. Interacts with and stabilizes bases of the 16S rRNA that are involved in tRNA selection in the A site and with the mRNA backbone. Located at the interface of the 30S and 50S subunits, it traverses the body of the 30S subunit contacting proteins on the other side and probably holding the rRNA structure together. The combined cluster of proteins S8, S12 and S17 appears to hold together the shoulder and platform of the 30S subunit. The protein is Small ribosomal subunit protein uS12 of Bacillus pumilus (strain SAFR-032).